Reading from the N-terminus, the 1134-residue chain is Phytochrome 1 (1134 aa).

The GAF domain occupies 219-401; sequence DIGLLCDTVV…VFGLQLNMEA (183 aa). C324 is a binding site for phytochromobilin. Residues 616–687 enclose the PAS 1 domain; the sequence is VANEMVRLIE…RLLYLALQGD (72 aa). Residues 690 to 746 enclose the PAC domain; sequence QNVELKLKTFGGQKDKEAVILVVNACASRDVSDNVVGVCFVGQDVTGQKVVMDKFTR. The 72-residue stretch at 750 to 821 folds into the PAS 2 domain; it reads DYKAIVQNPN…KGQDAVTKFM (72 aa). A Histidine kinase domain is found at 901-1121; the sequence is YIRQEIKNPL…LVSLELPLAQ (221 aa).

The protein belongs to the phytochrome family. In terms of assembly, homodimer. In terms of processing, contains one covalently linked phytochromobilin chromophore.

Its function is as follows. Regulatory photoreceptor which exists in two forms that are reversibly interconvertible by light: the Pr form that absorbs maximally in the red region of the spectrum and the Pfr form that absorbs maximally in the far-red region. Photoconversion of Pr to Pfr induces an array of morphogenic responses, whereas reconversion of Pfr to Pr cancels the induction of those responses. Pfr controls the expression of a number of nuclear genes including those encoding the small subunit of ribulose-bisphosphate carboxylase, chlorophyll A/B binding protein, protochlorophyllide reductase, rRNA, etc. It also controls the expression of its own gene(s) in a negative feedback fashion. In Selaginella martensii (Martens's spike moss), this protein is Phytochrome 1 (PHY1).